We begin with the raw amino-acid sequence, 833 residues long: Ribosome biogenesis protein BOP1 homolog (833 aa).

A disordered region spans residues 20-202; the sequence is NKKSEPIAVS…DSDDSSEDES (183 aa). Residues 36-56 are compositionally biased toward low complexity; the sequence is SKPTTTATTTVSKSPVSTITT. Acidic residues-rich tracts occupy residues 90-111 and 136-150; these read SEDDEDYESEEDDEGDDEEDVE and EAEESLVEYQSEDDS. A compositionally biased stretch (low complexity) spans 154–170; the sequence is SSKSSSSTTTTTTTTKK. Polar residues predominate over residues 182-192; it reads KQWTNDPNQFY. Residues 193–202 are compositionally biased toward acidic residues; that stretch reads DSDDSSEDES. WD repeat units follow at residues 331 to 370, 488 to 527, and 529 to 569; these read TKAIRMGWIKLNKKGKKGEKDKKDGNFDLWADEGEEKEKT, GHKARVRSISISPNGQWLASGSDDCTIKIWEVSSTRCLYS, and EVES…TQTE. The tract at residues 568-592 is disordered; the sequence is TEHSPETEKILTKPPTDSSTEQQQN. A compositionally biased stretch (polar residues) spans 582 to 592; the sequence is PTDSSTEQQQN. WD repeat units follow at residues 618 to 660, 663 to 701, 704 to 743, 747 to 786, and 802 to 833; these read HHPF…TQSP, KSKTPNQVTRFHPNKPIFFVADQNIIRVYDLMKQELIKK, TGCRYISSIDIHPQGDNVIMGGYDKKVCWFDLDLSVRPYK, YHKMAVRKVIYHPTLPLFASCSDDLSIHVFHGMVYDDLLQ, and INDLGVLDIVFHPKQPWIFSSGADSTIRLYTN.

This sequence belongs to the WD repeat BOP1/ERB1 family.

It is found in the nucleus. The protein resides in the nucleolus. It localises to the nucleoplasm. In terms of biological role, required for maturation of ribosomal RNAs and formation of the large ribosomal subunit. The chain is Ribosome biogenesis protein BOP1 homolog from Dictyostelium discoideum (Social amoeba).